A 337-amino-acid polypeptide reads, in one-letter code: Protein RecA (337 aa).

66-73 (GPESSGKT) contacts ATP.

Belongs to the RecA family.

It localises to the cytoplasm. In terms of biological role, can catalyze the hydrolysis of ATP in the presence of single-stranded DNA, the ATP-dependent uptake of single-stranded DNA by duplex DNA, and the ATP-dependent hybridization of homologous single-stranded DNAs. It interacts with LexA causing its activation and leading to its autocatalytic cleavage. The chain is Protein RecA from Mesomycoplasma hyopneumoniae (strain J / ATCC 25934 / NCTC 10110) (Mycoplasma hyopneumoniae).